The primary structure comprises 305 residues: Phosphoribosylaminoimidazole-succinocarboxamide synthase (305 aa).

The protein belongs to the SAICAR synthetase family.

The catalysed reaction is 5-amino-1-(5-phospho-D-ribosyl)imidazole-4-carboxylate + L-aspartate + ATP = (2S)-2-[5-amino-1-(5-phospho-beta-D-ribosyl)imidazole-4-carboxamido]succinate + ADP + phosphate + 2 H(+). The protein operates within purine metabolism; IMP biosynthesis via de novo pathway; 5-amino-1-(5-phospho-D-ribosyl)imidazole-4-carboxamide from 5-amino-1-(5-phospho-D-ribosyl)imidazole-4-carboxylate: step 1/2. This chain is Phosphoribosylaminoimidazole-succinocarboxamide synthase, found in Tropheryma whipplei (strain TW08/27) (Whipple's bacillus).